A 484-amino-acid chain; its full sequence is Protein DETOXIFICATION 33 (484 aa).

Positions 1-16 (MGKDKTLPLLDPREPP) are enriched in basic and acidic residues. The interval 1-22 (MGKDKTLPLLDPREPPELTGTK) is disordered. Transmembrane regions (helical) follow at residues 39 to 59 (LWEL…LGAL), 81 to 101 (VISG…ETLC), 122 to 142 (VILF…PPIL), 155 to 175 (AGKF…NFPI), 190 to 210 (WISG…ILYF), 218 to 238 (AITL…YILI), 267 to 287 (ALML…TGLL), 294 to 314 (VDAI…SIGF), 338 to 358 (VIVV…VVLA), 380 to 400 (IAVL…LSGV), 409 to 429 (LVAY…GLVL), and 439 to 459 (GIWG…IGII).

It belongs to the multi antimicrobial extrusion (MATE) (TC 2.A.66.1) family.

It localises to the membrane. This is Protein DETOXIFICATION 33 from Arabidopsis thaliana (Mouse-ear cress).